Here is a 234-residue protein sequence, read N- to C-terminus: Probable plastid-lipid-associated protein 5, chloroplastic (234 aa).

A chloroplast-targeting transit peptide spans 1-45 (MALPWCLKTGVLTSPAAGFNHPSDSGFAVPTKLLSIRKGDRERLR).

The protein belongs to the PAP/fibrillin family.

It localises to the plastid. The protein localises to the chloroplast thylakoid. In Arabidopsis thaliana (Mouse-ear cress), this protein is Probable plastid-lipid-associated protein 5, chloroplastic (PAP5).